Consider the following 410-residue polypeptide: Argininosuccinate synthase (410 aa).

ATP-binding positions include 11-19 and Ala37; that span reads AYSGGLDTS. Positions 88 and 93 each coordinate L-citrulline. ATP is bound at residue 116–124; that stretch reads SHGCTGKGN. L-aspartate-binding residues include Thr120, Asn124, and Asp125. An L-citrulline-binding site is contributed by Asn124. L-citrulline contacts are provided by Arg128, Ser181, Ser190, Glu269, and Tyr281.

Belongs to the argininosuccinate synthase family. Type 1 subfamily. Homotetramer.

The protein resides in the cytoplasm. It catalyses the reaction L-citrulline + L-aspartate + ATP = 2-(N(omega)-L-arginino)succinate + AMP + diphosphate + H(+). Its pathway is amino-acid biosynthesis; L-arginine biosynthesis; L-arginine from L-ornithine and carbamoyl phosphate: step 2/3. The polypeptide is Argininosuccinate synthase (arg12) (Schizosaccharomyces pombe (strain 972 / ATCC 24843) (Fission yeast)).